The following is a 500-amino-acid chain: Glycerol kinase (500 aa).

Thr-16 provides a ligand contact to ADP. ATP is bound by residues Thr-16 and Thr-17. Sn-glycerol 3-phosphate is bound at residue Thr-16. Arg-20 is an ADP binding site. Arg-86, Glu-87, Tyr-138, and Asp-243 together coordinate sn-glycerol 3-phosphate. 5 residues coordinate glycerol: Arg-86, Glu-87, Tyr-138, Asp-243, and Gln-244. ADP-binding residues include Thr-265 and Gly-313. The ATP site is built by Thr-265, Gly-313, Gln-317, and Gly-414. 2 residues coordinate ADP: Gly-414 and Asn-418.

This sequence belongs to the FGGY kinase family.

It catalyses the reaction glycerol + ATP = sn-glycerol 3-phosphate + ADP + H(+). It functions in the pathway polyol metabolism; glycerol degradation via glycerol kinase pathway; sn-glycerol 3-phosphate from glycerol: step 1/1. Its activity is regulated as follows. Inhibited by fructose 1,6-bisphosphate (FBP). In terms of biological role, key enzyme in the regulation of glycerol uptake and metabolism. Catalyzes the phosphorylation of glycerol to yield sn-glycerol 3-phosphate. This Nostoc sp. (strain PCC 7120 / SAG 25.82 / UTEX 2576) protein is Glycerol kinase.